The sequence spans 225 residues: Phosphoribosylformylglycinamidine synthase subunit PurQ (225 aa).

The region spanning 4–225 (RIGVITFPGT…LSVLDTLVTA (222 aa)) is the Glutamine amidotransferase type-1 domain. The active-site Nucleophile is C87. Catalysis depends on residues H196 and E198.

Part of the FGAM synthase complex composed of 1 PurL, 1 PurQ and 2 PurS subunits.

The protein resides in the cytoplasm. The catalysed reaction is N(2)-formyl-N(1)-(5-phospho-beta-D-ribosyl)glycinamide + L-glutamine + ATP + H2O = 2-formamido-N(1)-(5-O-phospho-beta-D-ribosyl)acetamidine + L-glutamate + ADP + phosphate + H(+). It carries out the reaction L-glutamine + H2O = L-glutamate + NH4(+). Its pathway is purine metabolism; IMP biosynthesis via de novo pathway; 5-amino-1-(5-phospho-D-ribosyl)imidazole from N(2)-formyl-N(1)-(5-phospho-D-ribosyl)glycinamide: step 1/2. In terms of biological role, part of the phosphoribosylformylglycinamidine synthase complex involved in the purines biosynthetic pathway. Catalyzes the ATP-dependent conversion of formylglycinamide ribonucleotide (FGAR) and glutamine to yield formylglycinamidine ribonucleotide (FGAM) and glutamate. The FGAM synthase complex is composed of three subunits. PurQ produces an ammonia molecule by converting glutamine to glutamate. PurL transfers the ammonia molecule to FGAR to form FGAM in an ATP-dependent manner. PurS interacts with PurQ and PurL and is thought to assist in the transfer of the ammonia molecule from PurQ to PurL. The sequence is that of Phosphoribosylformylglycinamidine synthase subunit PurQ from Nocardia farcinica (strain IFM 10152).